Here is a 610-residue protein sequence, read N- to C-terminus: Calmegin (610 aa).

Residues 1-19 form the signal peptide; the sequence is MHFQAFWLCLGLLFISINA. Residues 20–471 are Lumenal-facing; it reads EFMDDDVETE…LMAAAEGHPW (452 aa). Residue lysine 128 is modified to N6-acetyllysine. Cysteines 151 and 185 form a disulfide. The segment at 258 to 338 is disordered; that stretch reads VPPIKPPKEI…KPDDWNEDTD (81 aa). A compositionally biased stretch (basic and acidic residues) spans 263–284; sequence PPKEIEDPNDKKPEEWDERAKI. Repeat copies occupy residues 267–280, 284–297, 303–316, 322–335, 339–352, 356–369, 370–383, and 384–397. Positions 317–332 are enriched in basic and acidic residues; that stretch reads DEPKFIPDPNAEKPDD. An interaction with PPIB region spans residues 317–350; sequence DEPKFIPDPNAEKPDDWNEDTDGEWEAPQILNPA. Cysteine 351 and cysteine 355 are joined by a disulfide. The helical transmembrane segment at 472 to 492 threads the bilayer; sequence LWLIYLVTAGVPIALITSFCW. Topologically, residues 493–610 are cytoplasmic; sequence PRKVKKKHKD…SVRKRRVRKD (118 aa). Residues 521–548 are compositionally biased toward basic and acidic residues; the sequence is QEEKEEKAALEKPMDLEEEKKQNDGEML. The segment at 521 to 610 is disordered; that stretch reads QEEKEEKAAL…SVRKRRVRKD (90 aa). The segment covering 549 to 571 has biased composition (acidic residues); the sequence is EKEEESEPEEKSEEEIEIIEGQE. Phosphoserine occurs at positions 560, 576, 579, 581, 591, 594, and 601. Positions 601–610 are enriched in basic residues; it reads SVRKRRVRKD.

This sequence belongs to the calreticulin family. As to quaternary structure, interacts with PPIB. Interacts with ADAM2. Interacts with PDILT. In terms of tissue distribution, detected in testis (at protein level). Detected in testis.

It is found in the endoplasmic reticulum membrane. Functions during spermatogenesis as a chaperone for a range of client proteins that are important for sperm adhesion onto the egg zona pellucida and for subsequent penetration of the zona pellucida. Required for normal sperm migration from the uterus into the oviduct. Required for normal male fertility. Binds calcium ions. The protein is Calmegin (CLGN) of Homo sapiens (Human).